A 241-amino-acid chain; its full sequence is DVSFSLSGSSSTSYSKFIGALRKALPSNGTVYNITLLLSSASGASRYTLMKLSNYDGKAITVAIDVTNVYIMGYLVNSTSYFFNESDAKLASQYVFAGSTIVTLPYSGNYEKLQTAAGKIREKIPLGFPALDSAITTLFHYDSTAAAAAFLVIIQTTAESSRFKYIEGQIIMRISKNGVPSLATISLENEWSALSKQIQLAQTNNGTFKTPVVIMDAGGQRVEIGNVGSKVVTKNIQLLLN.

N-linked (GlcNAc...) asparagine glycans are attached at residues Asn-28, Asn-33, Asn-77, and Asn-84. Glu-159 is an active-site residue. Asn-205 carries N-linked (GlcNAc...) asparagine glycosylation.

Belongs to the ribosome-inactivating protein family. Type 1 RIP subfamily.

The catalysed reaction is Endohydrolysis of the N-glycosidic bond at one specific adenosine on the 28S rRNA.. The chain is Ribosome-inactivating protein luffaculin 1 from Luffa acutangula (Ridged gourd).